Reading from the N-terminus, the 402-residue chain is NADH-quinone oxidoreductase subunit D (402 aa).

It belongs to the complex I 49 kDa subunit family. NDH-1 is composed of 14 different subunits. Subunits NuoB, C, D, E, F, and G constitute the peripheral sector of the complex.

The protein resides in the cell inner membrane. It carries out the reaction a quinone + NADH + 5 H(+)(in) = a quinol + NAD(+) + 4 H(+)(out). Functionally, NDH-1 shuttles electrons from NADH, via FMN and iron-sulfur (Fe-S) centers, to quinones in the respiratory chain. The immediate electron acceptor for the enzyme in this species is believed to be ubiquinone. Couples the redox reaction to proton translocation (for every two electrons transferred, four hydrogen ions are translocated across the cytoplasmic membrane), and thus conserves the redox energy in a proton gradient. In Cereibacter sphaeroides (strain ATCC 17025 / ATH 2.4.3) (Rhodobacter sphaeroides), this protein is NADH-quinone oxidoreductase subunit D.